An 800-amino-acid polypeptide reads, in one-letter code: Ent-copalyl diphosphate synthase 2 (800 aa).

The interval 52–80 (QGQETRERRQLDDDEHARPPQGGDDDVAA) is disordered. Positions 55–69 (ETRERRQLDDDEHAR) are enriched in basic and acidic residues. Position 242 (lysine 242) interacts with substrate. Residues aspartate 374 and aspartate 376 each contribute to the Mg(2+) site. The DXDD motif signature appears at 374–377 (DIDD). Lysine 461 is a substrate binding site.

This sequence belongs to the terpene synthase family. Mg(2+) is required as a cofactor.

It carries out the reaction (2E,6E,10E)-geranylgeranyl diphosphate = ent-copalyl diphosphate. Functionally, catalyzes the conversion of geranylgeranyl diphosphate to the phytoalexin precursor ent-copalyl diphosphate. The chain is Ent-copalyl diphosphate synthase 2 (CPS2) from Oryza sativa subsp. indica (Rice).